Consider the following 555-residue polypeptide: Putative protein NRT1/ PTR FAMILY 2.14 (555 aa).

The next 12 helical transmembrane spans lie at 62 to 82 (VTLI…GAFI), 93 to 113 (IVFG…TSLV), 135 to 155 (YSQL…TGGI), 181 to 201 (FFSW…TLVL), 209 to 229 (WGIG…LLFV), 234 to 254 (YVFV…LVAA), 319 to 339 (IKSI…FLAM), 363 to 383 (LIPP…WLPF), 405 to 425 (LQKV…SGIV), 441 to 461 (VFWL…TIVG), 480 to 500 (SLLY…VSIV), and 523 to 543 (CFYY…FWCA).

This sequence belongs to the major facilitator superfamily. Proton-dependent oligopeptide transporter (POT/PTR) (TC 2.A.17) family. In terms of tissue distribution, not detected.

Its subcellular location is the membrane. The protein is Putative protein NRT1/ PTR FAMILY 2.14 (NPF2.14) of Arabidopsis thaliana (Mouse-ear cress).